A 447-amino-acid polypeptide reads, in one-letter code: Probable butyrate:acetyl-CoA coenzyme A-transferase (447 aa).

Residue 220–224 participates in CoA binding; sequence GIGGT. Glu245 functions as the 5-glutamyl coenzyme A thioester intermediate in the catalytic mechanism. Residues Ile320 and Gly343 each coordinate CoA.

It belongs to the acetyl-CoA hydrolase/transferase family.

The protein localises to the cytoplasm. It carries out the reaction butanoate + acetyl-CoA = butanoyl-CoA + acetate. Its pathway is lipid metabolism; butanoate metabolism. In terms of biological role, coenzyme A-transferase that converts butyrate to butyryl-CoA. Involved in the syntrophic growth of S.wolfei on butyrate in cooperation with methanogens or an appropriate hydrogen-scavenging bacterium, as part of the butyrate oxidation pathway. The chain is Probable butyrate:acetyl-CoA coenzyme A-transferase from Syntrophomonas wolfei subsp. wolfei (strain DSM 2245B / Goettingen).